The sequence spans 502 residues: Histidine--tRNA ligase (502 aa).

The protein belongs to the class-II aminoacyl-tRNA synthetase family. As to quaternary structure, homodimer.

Its subcellular location is the cytoplasm. The catalysed reaction is tRNA(His) + L-histidine + ATP = L-histidyl-tRNA(His) + AMP + diphosphate + H(+). In Brucella suis biovar 1 (strain 1330), this protein is Histidine--tRNA ligase (hisS).